The primary structure comprises 164 residues: LWamide neuropeptides (164 aa).

Positions 1–6 (RSADAQ) are excised as a propeptide. The interval 1–92 (RSADAQQHGL…WGRSADAQQP (92 aa)) is disordered. A tryptophan amide mark is found at W11 and W20. Positions 23 to 27 (SADAQ) are excised as a propeptide. 2 positions are modified to tryptophan amide: W32 and W41. Positions 44 to 49 (SAEPGQ) are excised as a propeptide. W53 and W62 each carry tryptophan amide. A propeptide spanning residues 65–70 (SAEPLQ) is cleaved from the precursor. W74 and W83 each carry tryptophan amide. The propeptide occupies 86–90 (SADAQ). Tryptophan amide is present on residues W95, W106, and W115. The propeptide occupies 118–123 (SADPGQ). W127 and W137 each carry tryptophan amide. Positions 140-164 (SYEPPQFEDLEDLKKKSAIPKPSEQ) are excised as a propeptide.

Belongs to the LWamide neuropeptide family.

The protein resides in the secreted. Functionally, metamorphosin A may be part of an internal signaling system involved in control of metamorphosis. This chain is LWamide neuropeptides, found in Actinia equina (Beadlet anemone).